A 98-amino-acid chain; its full sequence is NADH-ubiquinone oxidoreductase chain 4L (98 aa).

3 consecutive transmembrane segments (helical) span residues 1–21 (MPVV…GLLI), 29–49 (SLLC…VTVL), and 61–81 (IILL…LVMV).

Belongs to the complex I subunit 4L family. In terms of assembly, core subunit of respiratory chain NADH dehydrogenase (Complex I) which is composed of 45 different subunits.

Its subcellular location is the mitochondrion inner membrane. The catalysed reaction is a ubiquinone + NADH + 5 H(+)(in) = a ubiquinol + NAD(+) + 4 H(+)(out). Core subunit of the mitochondrial membrane respiratory chain NADH dehydrogenase (Complex I) which catalyzes electron transfer from NADH through the respiratory chain, using ubiquinone as an electron acceptor. Part of the enzyme membrane arm which is embedded in the lipid bilayer and involved in proton translocation. The sequence is that of NADH-ubiquinone oxidoreductase chain 4L (MT-ND4L) from Ursus americanus (American black bear).